Consider the following 610-residue polypeptide: Menin (610 aa).

An interaction with FANCD2 region spans residues 214-390; sequence GVAERSWLYL…SLLEAGEERP (177 aa). 2 disordered regions span residues 385–404 and 460–552; these read AGEE…GSAL and REAE…PVLT. A compositionally biased stretch (low complexity) spans 393 to 402; sequence QTQGTQSQGS. Basic and acidic residues predominate over residues 484–500; it reads RRESKPEEPPPPKKPAL. Residue S487 is modified to Phosphoserine. 2 stretches are compositionally biased toward pro residues: residues 512–521 and 537–548; these read PGPPRKPPGT and VPAPAASPPPEG. The residue at position 543 (S543) is a Phosphoserine. T594 carries the post-translational modification Phosphothreonine.

In terms of assembly, component of the MLL-HCF complex, at least composed of KMT2A/MLL1, MEN1, ASH2L, RBBP5, DPY30, WDR5, HCFC1 and HCFC2. Component of the menin-associated histone methyltransferase complex, at least composed of KMT2B/MLL4, MEN1, ASH2L, RBBP5, DPY30 and WDR5. Interacts with POLR2B. Interacts with POLR2A phosphorylated at 'Ser-5', but not with the unphosphorylated, nor 'Ser-2' phosphorylated POLR2A forms. Interacts with FANCD2 and DBF4. Interacts with SMAD3, but not with SMAD2, nor SMAD4. Directly interacts with NFKB1, NFKB2 and RELA. Interacts with JUND (via MBM motif); inhibits the interaction of JUND with MAPK10 and the phosphorylation of JUND by MAP kinases MAPK8 and MAPK10. Interacts with KMT2A (via MBM motif). The KMT2A-MEN1 complex interacts with PSIP1 with a greater affinity as MEN1 enhances interaction of KMT2A with PSIP1.

It is found in the nucleus. Essential component of a MLL/SET1 histone methyltransferase (HMT) complex, a complex that specifically methylates 'Lys-4' of histone H3 (H3K4). Functions as a transcriptional regulator. Binds to the TERT promoter and represses telomerase expression. Plays a role in TGFB1-mediated inhibition of cell-proliferation, possibly regulating SMAD3 transcriptional activity. Represses JUND-mediated transcriptional activation on AP1 sites, as well as that mediated by NFKB subunit RELA. Positively regulates HOXC8 and HOXC6 gene expression. May be involved in normal hematopoiesis through the activation of HOXA9 expression. May be involved in DNA repair. This is Menin (MEN1) from Bos taurus (Bovine).